Consider the following 1004-residue polypeptide: Bifunctional glutamine synthetase adenylyltransferase/adenylyl-removing enzyme (1004 aa).

The tract at residues 1–497 (MCCTTVVVVR…LHAKLFYQPL (497 aa)) is adenylyl removase. The adenylyl transferase stretch occupies residues 502-1004 (GPASLEIRHG…KTFVRKVFGS (503 aa)).

Belongs to the GlnE family. Requires Mg(2+) as cofactor.

The enzyme catalyses [glutamine synthetase]-O(4)-(5'-adenylyl)-L-tyrosine + phosphate = [glutamine synthetase]-L-tyrosine + ADP. It carries out the reaction [glutamine synthetase]-L-tyrosine + ATP = [glutamine synthetase]-O(4)-(5'-adenylyl)-L-tyrosine + diphosphate. In terms of biological role, involved in the regulation of glutamine synthetase GlnA, a key enzyme in the process to assimilate ammonia. When cellular nitrogen levels are high, the C-terminal adenylyl transferase (AT) inactivates GlnA by covalent transfer of an adenylyl group from ATP to specific tyrosine residue of GlnA, thus reducing its activity. Conversely, when nitrogen levels are low, the N-terminal adenylyl removase (AR) activates GlnA by removing the adenylyl group by phosphorolysis, increasing its activity. The regulatory region of GlnE binds the signal transduction protein PII (GlnB) which indicates the nitrogen status of the cell. The protein is Bifunctional glutamine synthetase adenylyltransferase/adenylyl-removing enzyme of Mycobacterium leprae (strain TN).